The chain runs to 363 residues: NADH-quinone oxidoreductase subunit H (363 aa).

The next 10 helical transmembrane spans lie at 29–49, 62–82, 96–116, 127–147, 163–183, 202–222, 238–257, 264–286, 299–319, and 339–359; these read VLKI…YVVW, GPMY…KLLF, FIIA…VVPF, VGLL…ILAG, AAQV…VMIA, FFDW…VSGV, EIVA…LFFL, ILVS…QGWV, KGGW…YIWF, and FIPL…YGVI.

Belongs to the complex I subunit 1 family. In terms of assembly, NDH-1 is composed of 14 different subunits. Subunits NuoA, H, J, K, L, M, N constitute the membrane sector of the complex.

Its subcellular location is the cell inner membrane. It carries out the reaction a quinone + NADH + 5 H(+)(in) = a quinol + NAD(+) + 4 H(+)(out). Functionally, NDH-1 shuttles electrons from NADH, via FMN and iron-sulfur (Fe-S) centers, to quinones in the respiratory chain. The immediate electron acceptor for the enzyme in this species is believed to be ubiquinone. Couples the redox reaction to proton translocation (for every two electrons transferred, four hydrogen ions are translocated across the cytoplasmic membrane), and thus conserves the redox energy in a proton gradient. This subunit may bind ubiquinone. This Xanthomonas oryzae pv. oryzae (strain PXO99A) protein is NADH-quinone oxidoreductase subunit H.